An 82-amino-acid polypeptide reads, in one-letter code: Exodeoxyribonuclease 7 small subunit (82 aa).

Belongs to the XseB family. In terms of assembly, heterooligomer composed of large and small subunits.

Its subcellular location is the cytoplasm. The catalysed reaction is Exonucleolytic cleavage in either 5'- to 3'- or 3'- to 5'-direction to yield nucleoside 5'-phosphates.. In terms of biological role, bidirectionally degrades single-stranded DNA into large acid-insoluble oligonucleotides, which are then degraded further into small acid-soluble oligonucleotides. This is Exodeoxyribonuclease 7 small subunit from Colwellia psychrerythraea (strain 34H / ATCC BAA-681) (Vibrio psychroerythus).